Consider the following 343-residue polypeptide: Protein RecA (343 aa).

65–72 (GPESSGKT) is an ATP binding site.

The protein belongs to the RecA family.

It is found in the cytoplasm. Its function is as follows. Can catalyze the hydrolysis of ATP in the presence of single-stranded DNA, the ATP-dependent uptake of single-stranded DNA by duplex DNA, and the ATP-dependent hybridization of homologous single-stranded DNAs. It interacts with LexA causing its activation and leading to its autocatalytic cleavage. The protein is Protein RecA of Pseudoalteromonas atlantica (strain T6c / ATCC BAA-1087).